Reading from the N-terminus, the 266-residue chain is Putative carbamate hydrolase RutD (266 aa).

It belongs to the AB hydrolase superfamily. Hydrolase RutD family.

The enzyme catalyses carbamate + 2 H(+) = NH4(+) + CO2. Functionally, involved in pyrimidine catabolism. May facilitate the hydrolysis of carbamate, a reaction that can also occur spontaneously. This is Putative carbamate hydrolase RutD from Escherichia coli O127:H6 (strain E2348/69 / EPEC).